Consider the following 193-residue polypeptide: RNA polymerase sigma-H factor (193 aa).

A Polymerase core binding motif is present at residues 49-62 (DVAQEAFIKAYRAL). Residues 157–176 (YEDIATVMQCPVGTVRSRIF) constitute a DNA-binding region (H-T-H motif).

The protein belongs to the sigma-70 factor family. ECF subfamily.

Functionally, sigma factors are initiation factors that promote the attachment of RNA polymerase to specific initiation sites and are then released. This sigma factor regulates genes such as algD, involved in alginate biosynthesis. The polypeptide is RNA polymerase sigma-H factor (algU) (Pseudomonas aeruginosa (strain ATCC 15692 / DSM 22644 / CIP 104116 / JCM 14847 / LMG 12228 / 1C / PRS 101 / PAO1)).